A 1077-amino-acid polypeptide reads, in one-letter code: Receptor-like protein 1 (1077 aa).

Residues 1 to 38 (MRTDERRRWWVKPKKHITLVFITITMIIQFQMKGCVSC) form the signal peptide. Residues 39-120 (VETERMGLLQ…SQTRSLNLSL (82 aa)) form an N-cap region. Over 39–1024 (VETERMGLLQ…NEEEGNVIDM (986 aa)) the chain is Extracellular. Residues asparagine 117, asparagine 131, and asparagine 139 are each glycosylated (N-linked (GlcNAc...) asparagine). LRR repeat units follow at residues 124–147 (FPQLQSLNLSWNWFTNLSDHFLGF), 153–176 (LDKLTTLDFSHNMFDNSIVPFLNA), 177–201 (ATSIRSLHLESNYMEGVFPPQELSN), 202–225 (MTNLRVLNLKDNSFSFLSSQGLTD), 227–250 (RDLEVLDLSFNGVNDSEASHSLST), 251–274 (AKLKTLDLNFNPLSDFSQLKGLES), 275–299 (LQELQVLKLRGNKFNHTLSTHVLKD), 300–324 (LKMLQELDLSDNGFTNLDHGRGLEI), 326–348 (TSLQVLDFKRNQLSLTHEGYLGI), 351–376 (LMKLRELDLSSNALTSLPYCLGNLTH), 378–397 (RTLDLSNNQLNGNLSSFVSG), and 399–424 (PSVLEYLSLLDNNFDGSFLFNSLVNQ). Asparagine 201 carries an N-linked (GlcNAc...) asparagine glycan. Residue asparagine 240 is glycosylated (N-linked (GlcNAc...) asparagine). N-linked (GlcNAc...) asparagine glycosylation occurs at asparagine 289. N-linked (GlcNAc...) asparagine glycans are attached at residues asparagine 373, asparagine 390, and asparagine 423. An LRR 13; degenerate repeat occupies 425 to 449 (TRLTVFKLSSKVGVIQVQTESSWAP). 19 LRR repeats span residues 450 to 473 (LFQLKMLYLSNCSLGSTMLGFLVH), 474 to 498 (QRDLCFVDLSHNKLTGTFPTWLVKN), 499 to 522 (NTRLQTILLSGNSLTKLQLPILVH), 524 to 545 (LQVLDISSNMIYDSIQEDIGMV), 546 to 570 (FPNLRFMNFSSNHFQGTIPSSIGEM), 572 to 594 (SLQVLDMSSNGLYGQLPIMFLSG), 595 to 621 (CYSLRVLKLSNNQLQGKIFSKHANLTG), 623 to 643 (VGLFLDGNNFTGSLEEGLLKS), 644 to 666 (KNLTLLDISDNRFSGMLPLWIGR), 667 to 694 (ISRLSYLYMSGNQLKGPFPFLRQSPWVE), 696 to 713 (MDISHNSFSGSIPRNVNF), 714 to 737 (PSLRELRLQNNEFTGLVPGNLFKA), 739 to 761 (GLEVLDLRNNNFSGKILNTIDQT), 762 to 785 (SKLRILLLRNNSFQTYIPGKICQL), 786 to 808 (SEVGLLDLSHNQFRGPIPSCFSK), 877 to 901 (LRYMHGLDLSSNELSGEIPIEIGDL), 902 to 925 (QNIRSLNLSSNRLTGSIPDSISKL), 927 to 949 (GLESLDLSNNKLDGSIPPALADL), and 951 to 970 (SLGYLNISYNNLSGEIPFKG). 2 N-linked (GlcNAc...) asparagine glycosylation sites follow: asparagine 460 and asparagine 498. The N-linked (GlcNAc...) asparagine glycan is linked to asparagine 553. N-linked (GlcNAc...) asparagine glycosylation is found at asparagine 618, asparagine 631, and asparagine 645. N-linked (GlcNAc...) asparagine glycosylation is found at asparagine 749 and asparagine 771. Asparagine 908 carries an N-linked (GlcNAc...) asparagine glycan. N-linked (GlcNAc...) asparagine glycans are attached at residues asparagine 956 and asparagine 961. The segment at 971 to 1024 (HLVTFDERSYIGNAHLCGLPTNKNCISQRVPEPPSVSTHAKEEENEEEGNVIDM) is C-cap/acidic domain. Residues 1025–1045 (VWFYWTCAAVYISTSLALFAF) form a helical membrane-spanning segment. Over 1046–1077 (LYIDSRWSREWFYRVDLCVHHILQFKRSSVCN) the chain is Cytoplasmic.

This sequence belongs to the RLP family.

The protein localises to the cell membrane. Its function is as follows. Involved in plant defense. Confers resistance to the bacterial pathogen Xanthomonas through recognition of the microbe-associated molecular pattern (MAMP) eMax. Functionality seems to depend on the presence of the receptor kinase SOBIR1 as an adapter protein. This chain is Receptor-like protein 1, found in Arabidopsis thaliana (Mouse-ear cress).